We begin with the raw amino-acid sequence, 114 residues long: Macrophage migration inhibitory factor homolog (114 aa).

The Proton acceptor; via imino nitrogen role is filled by Pro-2. Lys-33 and Asn-98 together coordinate substrate.

This sequence belongs to the MIF family.

The protein localises to the secreted. The catalysed reaction is L-dopachrome = 5,6-dihydroxyindole-2-carboxylate. It carries out the reaction 3-phenylpyruvate = enol-phenylpyruvate. Functionally, tautomerization of the methyl ester of L-dopachrome. Inhibits migration of human peripheral blood mononuclear cells. This chain is Macrophage migration inhibitory factor homolog, found in Trichuris trichiura (Whipworm).